A 1228-amino-acid chain; its full sequence is DNA-directed RNA polymerase subunit beta (1228 aa).

Residues 1175–1204 (ESVDEDEQPQGLGAFEIGGDEIEEDKEDDK) are disordered. The segment covering 1192–1202 (GGDEIEEDKED) has biased composition (acidic residues).

Belongs to the RNA polymerase beta chain family. In terms of assembly, the RNAP catalytic core consists of 2 alpha, 1 beta, 1 beta' and 1 omega subunit. When a sigma factor is associated with the core the holoenzyme is formed, which can initiate transcription.

It catalyses the reaction RNA(n) + a ribonucleoside 5'-triphosphate = RNA(n+1) + diphosphate. In terms of biological role, DNA-dependent RNA polymerase catalyzes the transcription of DNA into RNA using the four ribonucleoside triphosphates as substrates. The sequence is that of DNA-directed RNA polymerase subunit beta from Caldicellulosiruptor bescii (strain ATCC BAA-1888 / DSM 6725 / KCTC 15123 / Z-1320) (Anaerocellum thermophilum).